The chain runs to 179 residues: Peptidyl-tRNA hydrolase (179 aa).

Tyrosine 15 lines the tRNA pocket. The active-site Proton acceptor is histidine 20. TRNA contacts are provided by tyrosine 66, asparagine 68, and asparagine 114.

Belongs to the PTH family. As to quaternary structure, monomer.

It is found in the cytoplasm. The enzyme catalyses an N-acyl-L-alpha-aminoacyl-tRNA + H2O = an N-acyl-L-amino acid + a tRNA + H(+). Hydrolyzes ribosome-free peptidyl-tRNAs (with 1 or more amino acids incorporated), which drop off the ribosome during protein synthesis, or as a result of ribosome stalling. In terms of biological role, catalyzes the release of premature peptidyl moieties from peptidyl-tRNA molecules trapped in stalled 50S ribosomal subunits, and thus maintains levels of free tRNAs and 50S ribosomes. This Chlamydia muridarum (strain MoPn / Nigg) protein is Peptidyl-tRNA hydrolase.